Here is a 454-residue protein sequence, read N- to C-terminus: L-serine dehydratase TdcG (454 aa).

The protein belongs to the iron-sulfur dependent L-serine dehydratase family. Requires [4Fe-4S] cluster as cofactor.

The enzyme catalyses L-serine = pyruvate + NH4(+). It participates in amino-acid degradation; L-threonine degradation via propanoate pathway. In Escherichia coli (strain K12), this protein is L-serine dehydratase TdcG (tdcG).